Reading from the N-terminus, the 273-residue chain is MLKQAVEPTGGFSFENCQRNASLEHVLPGLRVPHARKTGTTIAGLVFRDGVILGADTRATNDSVVADKSCEKIHFIAPKIYCCGAGVAADTEMTTRMAASKMELHALSTGREPRVATVTRILRQTLFRYQGHVGASLVVGGVDLNGPQLYEVHPHGSYSRLPFTALGSGQGAAVALLEDRFQPNMTLEAAQELLVEAITAGILSDLGSGGNVDACVITAGGAKLQRALSTPTEPVQRAGRYRFAPGTTPVLTREVRPLTLELLEETVQAMEVE.

M1 is modified (N-acetylmethionine). A propeptide spans M1–G39 (removed in mature form). T40 serves as the catalytic Nucleophile.

This sequence belongs to the peptidase T1B family. In terms of assembly, the 26S proteasome consists of a 20S proteasome core and two 19S regulatory subunits. The 20S proteasome core is composed of 28 subunits that are arranged in four stacked rings, resulting in a barrel-shaped structure. The two end rings are each formed by seven alpha subunits, and the two central rings are each formed by seven beta subunits. The catalytic chamber with the active sites is on the inside of the barrel. Component of the immunoproteasome, where it displaces the equivalent housekeeping subunit PSMB7. Component of the spermatoproteasome, a form of the proteasome specifically found in testis. Post-translationally, autocleaved. The resulting N-terminal Thr residue of the mature subunit is responsible for the nucleophile proteolytic activity. Detected in liver (at protein level).

Its subcellular location is the cytoplasm. The protein localises to the nucleus. The enzyme catalyses Cleavage of peptide bonds with very broad specificity.. Its function is as follows. The proteasome is a multicatalytic proteinase complex which is characterized by its ability to cleave peptides with Arg, Phe, Tyr, Leu, and Glu adjacent to the leaving group at neutral or slightly basic pH. The proteasome has an ATP-dependent proteolytic activity. This subunit is involved in antigen processing to generate class I binding peptides. Plays a role in determining the T-cell repertoire for an antiviral T-cell response. The polypeptide is Proteasome subunit beta type-10 (Psmb10) (Mus musculus (Mouse)).